The chain runs to 347 residues: UDP-galactose/UDP-glucose transporter 5 (347 aa).

8 consecutive transmembrane segments (helical) span residues 17-37 (LWKA…YGLL), 57-77 (LFLV…ALLA), 116-136 (VQTL…TLIM), 143-163 (FDYL…LFPA), 177-197 (TVWG…TSTF), 218-238 (ICSS…LPAV), 247-267 (CLFD…FISY), and 293-313 (CIWF…IVFG). The interval 325–347 (SEKPPAAQELPRDEEAQPLKGNP) is disordered.

The protein belongs to the nucleotide-sugar transporter family. UDP-galactose:UMP antiporter (TC 2.A.7.11) subfamily.

The protein localises to the membrane. Functionally, sugar transporter involved in the transport of nucleotide-sugars from cytoplasm into the Golgi and/or the endoplasmic reticulum. This is UDP-galactose/UDP-glucose transporter 5 from Arabidopsis thaliana (Mouse-ear cress).